Reading from the N-terminus, the 518-residue chain is ATP synthase subunit alpha (518 aa).

ATP is bound at residue 170 to 177; the sequence is GDRQTGKT.

The protein belongs to the ATPase alpha/beta chains family. In terms of assembly, F-type ATPases have 2 components, CF(1) - the catalytic core - and CF(0) - the membrane proton channel. CF(1) has five subunits: alpha(3), beta(3), gamma(1), delta(1), epsilon(1). CF(0) has three main subunits: a(1), b(2) and c(9-12). The alpha and beta chains form an alternating ring which encloses part of the gamma chain. CF(1) is attached to CF(0) by a central stalk formed by the gamma and epsilon chains, while a peripheral stalk is formed by the delta and b chains.

It localises to the cell membrane. It catalyses the reaction ATP + H2O + 4 H(+)(in) = ADP + phosphate + 5 H(+)(out). Produces ATP from ADP in the presence of a proton gradient across the membrane. The alpha chain is a regulatory subunit. This chain is ATP synthase subunit alpha, found in Mycoplasmoides gallisepticum (strain R(low / passage 15 / clone 2)) (Mycoplasma gallisepticum).